The primary structure comprises 100 residues: MDLTPREKDKLLIFTAGLVAERRLARGLKLNYPETMAYISAALLEGARDGQTVAELMHYGTTLLSREQVMEGIPEMIPDIQVEATFPDGTKLVTVHQPIA.

The protein belongs to the urease gamma subunit family. In terms of assembly, heterotrimer of UreA (gamma), UreB (beta) and UreC (alpha) subunits. Three heterotrimers associate to form the active enzyme.

It is found in the cytoplasm. The catalysed reaction is urea + 2 H2O + H(+) = hydrogencarbonate + 2 NH4(+). It participates in nitrogen metabolism; urea degradation; CO(2) and NH(3) from urea (urease route): step 1/1. This chain is Urease subunit gamma, found in Pseudomonas fluorescens (strain ATCC BAA-477 / NRRL B-23932 / Pf-5).